A 293-amino-acid polypeptide reads, in one-letter code: Fructose-bisphosphate aldolase (293 aa).

Ser50 provides a ligand contact to D-glyceraldehyde 3-phosphate. The active-site Proton donor is Asp85. Positions 86, 106, 136, and 178 each coordinate Zn(2+). Gly179 contributes to the dihydroxyacetone phosphate binding site. His208 provides a ligand contact to Zn(2+). Residues 209–211 and 230–233 each bind dihydroxyacetone phosphate; these read GGS and NVNT.

The protein belongs to the class II fructose-bisphosphate aldolase family. It depends on Zn(2+) as a cofactor.

It catalyses the reaction beta-D-fructose 1,6-bisphosphate = D-glyceraldehyde 3-phosphate + dihydroxyacetone phosphate. Its pathway is carbohydrate degradation; glycolysis; D-glyceraldehyde 3-phosphate and glycerone phosphate from D-glucose: step 4/4. Its function is as follows. Catalyzes the aldol condensation of dihydroxyacetone phosphate (DHAP or glycerone-phosphate) with glyceraldehyde 3-phosphate (G3P) to form fructose 1,6-bisphosphate (FBP) in gluconeogenesis and the reverse reaction in glycolysis. This is Fructose-bisphosphate aldolase (fba) from Streptococcus pyogenes serotype M1.